The primary structure comprises 143 residues: uncharacterized protein (143 aa).

The helical transmembrane segment at 4–24 threads the bilayer; it reads FGIVALSIICSIAFLFVAYGV. The disordered stretch occupies residues 97 to 143; it reads TVPFVNTEAPPPRLSSSFSRQSGENAETQSQVSASPFNDKNSPYVQE. The segment covering 110–143 has biased composition (polar residues); sequence LSSSFSRQSGENAETQSQVSASPFNDKNSPYVQE.

The protein localises to the golgi apparatus membrane. This is an uncharacterized protein from Schizosaccharomyces pombe (strain 972 / ATCC 24843) (Fission yeast).